A 391-amino-acid polypeptide reads, in one-letter code: Putative B3 domain-containing protein Os08g0325100 (391 aa).

A DNA-binding region (TF-B3) is located at residues 32–125; sequence GDFQHEIRGE…QFDVIIFDQV (94 aa). The tract at residues 143 to 232 is disordered; the sequence is VQEGRTDATE…SSRAHPQPMP (90 aa). Residues 172–226 show a composition bias toward polar residues; sequence EGRTNATETLNSSRAHSQPMPMQTPATETLNSSRAHSQDMPMQSPATETLNSSRA.

It localises to the nucleus. This chain is Putative B3 domain-containing protein Os08g0325100, found in Oryza sativa subsp. japonica (Rice).